A 459-amino-acid polypeptide reads, in one-letter code: MKISVRNLEPTKVKLTVTVEPEELNPYLDAARKEIAKQVNVPGFRKGHVPGKIIDQRIGFAAVAGEAVNDAVPELYSKALEEKKIRPMAQPEFDVQDVPQSANDETKLKFTATVERRPDIELPEIDGLEIAISKPEVKDEDVDKRLEALRQRFGTLVGVDRPAAKGDFANIDLTAEIDGETVDSQEGVSYELGSNTMLDGLDEALDGLSAGEETTFEGTLEAGEHEGQKATVKVKVNSVKAEELPELNDEFASEASEFDTLDELKADIRKAAAQDAEGRQATEARDAFIAKLQEGLEIPVPKGVKANMVEEQLKGMTPDPEKATKEQKAQAEETVEKDLRDQMVLDALAEKLDVQVSQSDVFNFLASIAQQYGMDPNNFIQAIIKNGQLGSAVQEVGRSKGLLAGMRAVKFTADGEVVDLSAFLGEAAEDEESESVEAASAAAAVADELSAKDDAKDAE.

Residues 166–245 (GDFANIDLTA…VNSVKAEELP (80 aa)) enclose the PPIase FKBP-type domain.

It belongs to the FKBP-type PPIase family. Tig subfamily.

It localises to the cytoplasm. The enzyme catalyses [protein]-peptidylproline (omega=180) = [protein]-peptidylproline (omega=0). Functionally, involved in protein export. Acts as a chaperone by maintaining the newly synthesized protein in an open conformation. Functions as a peptidyl-prolyl cis-trans isomerase. The protein is Trigger factor of Bifidobacterium longum (strain NCC 2705).